The primary structure comprises 989 residues: Bifunctional glutamine synthetase adenylyltransferase/adenylyl-removing enzyme (989 aa).

The segment at 1–474 (MNSSAIDADI…HYGKLFEGDP (474 aa)) is adenylyl removase. The adenylyl transferase stretch occupies residues 480–989 (LPIDYAGGPD…FNRLIGGDSA (510 aa)).

This sequence belongs to the GlnE family. Requires Mg(2+) as cofactor.

The catalysed reaction is [glutamine synthetase]-O(4)-(5'-adenylyl)-L-tyrosine + phosphate = [glutamine synthetase]-L-tyrosine + ADP. The enzyme catalyses [glutamine synthetase]-L-tyrosine + ATP = [glutamine synthetase]-O(4)-(5'-adenylyl)-L-tyrosine + diphosphate. Functionally, involved in the regulation of glutamine synthetase GlnA, a key enzyme in the process to assimilate ammonia. When cellular nitrogen levels are high, the C-terminal adenylyl transferase (AT) inactivates GlnA by covalent transfer of an adenylyl group from ATP to specific tyrosine residue of GlnA, thus reducing its activity. Conversely, when nitrogen levels are low, the N-terminal adenylyl removase (AR) activates GlnA by removing the adenylyl group by phosphorolysis, increasing its activity. The regulatory region of GlnE binds the signal transduction protein PII (GlnB) which indicates the nitrogen status of the cell. The chain is Bifunctional glutamine synthetase adenylyltransferase/adenylyl-removing enzyme from Rhodopseudomonas palustris (strain BisB5).